A 325-amino-acid chain; its full sequence is NADH-quinone oxidoreductase subunit H (325 aa).

Helical transmembrane passes span 11–31 (VIIA…CGAF), 81–101 (VIFT…MAIV), 114–134 (IGLL…LFAG), 154–174 (LSYE…AGSF), 186–206 (LWNV…GVAV), 237–257 (FFVG…TLFF), 265–285 (LPPV…FILI), and 304–324 (VCLP…LYTA).

It belongs to the complex I subunit 1 family. In terms of assembly, NDH-1 is composed of 13 different subunits. Subunits NuoA, H, J, K, L, M, N constitute the membrane sector of the complex.

The protein resides in the cell inner membrane. The catalysed reaction is a quinone + NADH + 5 H(+)(in) = a quinol + NAD(+) + 4 H(+)(out). Its function is as follows. NDH-1 shuttles electrons from NADH, via FMN and iron-sulfur (Fe-S) centers, to quinones in the respiratory chain. The immediate electron acceptor for the enzyme in this species is believed to be ubiquinone. Couples the redox reaction to proton translocation (for every two electrons transferred, four hydrogen ions are translocated across the cytoplasmic membrane), and thus conserves the redox energy in a proton gradient. This subunit may bind ubiquinone. The polypeptide is NADH-quinone oxidoreductase subunit H (Erwinia tasmaniensis (strain DSM 17950 / CFBP 7177 / CIP 109463 / NCPPB 4357 / Et1/99)).